The primary structure comprises 794 residues: MRVTSSRLLQGGSLVSRVLKRRLNNASRTKKGWFSTRTLADSNEHLRRVFDDQAYFDNFTKSGAPEGAMNSLFGGNGVGLFRNRALISPQGLVDFSEESLERAKMLVSNMMAEVKTSEQGRLEYIKKLDQLSDVLCRVIDVAEFIRVSHPSQKWVDAAQRTHEIMFEYMNQLNTNVELYESLRDLLIDPAITTKLSKEEIEVGEYLRQDFERSGIHMDPNTRNNFVAITQEISLLGSHFNNDIHSLESYWCNISRSEFDKISDTVVKSEIYGYQSSSPASQNKDSGNIYIPLAGHIPYTILSKCEVESVRRKVWISLHNSPKEQIDTLNAFVKYRALLAKMLGYKSFAHYQLEHKMAKNPENVLTLLRNLQQGLISKEYGVCEEVKKLHSFKNGDDAVMTDEEILEDVKPWDREYLLAQLQSQTLKDEEPLEDISEYFSVGTIVSGLSKLFYSIYNVNLIPEATLKGETWDSNQVRKLNVFDVTSNKKLGYLYLDFWSPKVLPSHFTIVCSRKLNTDIGSESRDEMREMVQLDENEQHQLPVISLVCNLSKPQGTGVGRFTGMDSRKPTLLSLDQVDTIFHEMGHAMHSMIGKTDLHNLSGTRCVTDFVELPSVLMESFSKDPRVLCKIAKHYRTKEPLSKETLAKHQSHRVLLEESETFMQSKMAMLDQVLHNEDIINCGIKDFDSTAVYHHLESQLKVFADKWSTWHGKFPHLFSYGAVYYSYLLDRAIAEKIWHGLFKDDPWSREAGQKYKDSILKWGGTRDPWVCLADALGDERLGKGDSKAMEIIGQKV.

A mitochondrion-targeting transit peptide spans 1-39; the sequence is MRVTSSRLLQGGSLVSRVLKRRLNNASRTKKGWFSTRTL. Histidine 581 lines the Zn(2+) pocket. Residue glutamate 582 is part of the active site. Zn(2+) is bound by residues histidine 585 and histidine 588.

It belongs to the peptidase M3 family. The cofactor is Zn(2+).

It localises to the mitochondrion matrix. The enzyme catalyses Release of an N-terminal octapeptide as second stage of processing of some proteins imported into the mitochondrion.. In terms of biological role, cleaves proteins, imported into the mitochondrion, to their mature size. While most mitochondrial precursor proteins are processed to the mature form in one step by mitochondrial processing peptidase (MPP), the sequential cleavage by MIP of an octapeptide after initial processing by MPP is a required step for a subgroup of nuclear-encoded precursor proteins destined for the matrix or the inner membrane. This chain is Mitochondrial intermediate peptidase (OCT1), found in Debaryomyces hansenii (strain ATCC 36239 / CBS 767 / BCRC 21394 / JCM 1990 / NBRC 0083 / IGC 2968) (Yeast).